The primary structure comprises 275 residues: Large ribosomal subunit protein uL2 (275 aa).

The segment at 212 to 259 is disordered; sequence RWKGIRPTNRGVTMNPVDHPHGGGEGKTSGGRHPVTPWGQPTRGYKTR.

Belongs to the universal ribosomal protein uL2 family. Part of the 50S ribosomal subunit. Forms a bridge to the 30S subunit in the 70S ribosome.

Its function is as follows. One of the primary rRNA binding proteins. Required for association of the 30S and 50S subunits to form the 70S ribosome, for tRNA binding and peptide bond formation. It has been suggested to have peptidyltransferase activity; this is somewhat controversial. Makes several contacts with the 16S rRNA in the 70S ribosome. The polypeptide is Large ribosomal subunit protein uL2 (Acidobacterium capsulatum (strain ATCC 51196 / DSM 11244 / BCRC 80197 / JCM 7670 / NBRC 15755 / NCIMB 13165 / 161)).